The sequence spans 150 residues: UPF0178 protein Bcep18194_A4809 (150 aa).

This sequence belongs to the UPF0178 family.

The polypeptide is UPF0178 protein Bcep18194_A4809 (Burkholderia lata (strain ATCC 17760 / DSM 23089 / LMG 22485 / NCIMB 9086 / R18194 / 383)).